The following is a 261-amino-acid chain: tRNA 5-carboxymethoxyuridine methyltransferase (261 aa).

Residues Arg-26, 52–53 (GG), Asp-73, 102–103 (AQ), and His-119 each bind S-adenosyl-L-methionine.

The protein belongs to the class I-like SAM-binding methyltransferase superfamily. CmoM family.

The catalysed reaction is 5-carboxymethoxyuridine(34) in tRNA + S-adenosyl-L-methionine = 5-methoxycarbonylmethoxyuridine(34) in tRNA + S-adenosyl-L-homocysteine. In terms of biological role, catalyzes the methylation of 5-carboxymethoxyuridine (cmo5U) to form 5-methoxycarbonylmethoxyuridine (mcmo5U) at position 34 in tRNAs. Four tRNAs (tRNA(Ala1), tRNA(Ser1), tRNA(Pro3) and tRNA(Thr4)) are fully modified with mcmo5U in stationary-phase E.coli. Also present at low frequency in tRNA(Leu3) and tRNA(Val1). This chain is tRNA 5-carboxymethoxyuridine methyltransferase, found in Escherichia coli (strain K12).